A 504-amino-acid polypeptide reads, in one-letter code: ATP synthase subunit alpha 2 (504 aa).

Residue 169–176 (GDRQTGKT) participates in ATP binding.

Belongs to the ATPase alpha/beta chains family. In terms of assembly, F-type ATPases have 2 components, CF(1) - the catalytic core - and CF(0) - the membrane proton channel. CF(1) has five subunits: alpha(3), beta(3), gamma(1), delta(1), epsilon(1). CF(0) has three main subunits: a(1), b(2) and c(9-12). The alpha and beta chains form an alternating ring which encloses part of the gamma chain. CF(1) is attached to CF(0) by a central stalk formed by the gamma and epsilon chains, while a peripheral stalk is formed by the delta and b chains.

The protein localises to the cell membrane. It catalyses the reaction ATP + H2O + 4 H(+)(in) = ADP + phosphate + 5 H(+)(out). Produces ATP from ADP in the presence of a proton gradient across the membrane. The alpha chain is a regulatory subunit. The sequence is that of ATP synthase subunit alpha 2 from Listeria monocytogenes serovar 1/2a (strain ATCC BAA-679 / EGD-e).